The following is a 142-amino-acid chain: Nucleoside diphosphate kinase (142 aa).

K9, F57, R85, T91, R102, and N112 together coordinate ATP. The active-site Pros-phosphohistidine intermediate is H115.

The protein belongs to the NDK family. Homotetramer. Requires Mg(2+) as cofactor.

It localises to the cytoplasm. The enzyme catalyses a 2'-deoxyribonucleoside 5'-diphosphate + ATP = a 2'-deoxyribonucleoside 5'-triphosphate + ADP. It catalyses the reaction a ribonucleoside 5'-diphosphate + ATP = a ribonucleoside 5'-triphosphate + ADP. Major role in the synthesis of nucleoside triphosphates other than ATP. The ATP gamma phosphate is transferred to the NDP beta phosphate via a ping-pong mechanism, using a phosphorylated active-site intermediate. The sequence is that of Nucleoside diphosphate kinase from Dehalococcoides mccartyi (strain CBDB1).